We begin with the raw amino-acid sequence, 316 residues long: NADH-quinone oxidoreductase subunit H (316 aa).

The next 8 helical transmembrane spans lie at 6–26 (PAVV…LIWV), 74–94 (FVIA…VVPF), 98–118 (VGVI…SLAV), 145–165 (ISYE…AGSF), 177–197 (GWYV…AVAE), 233–253 (YLGI…GWLG), 256–276 (FLPP…FFIL), and 296–316 (VMLP…LSVP).

The protein belongs to the complex I subunit 1 family. NDH-1 is composed of 14 different subunits. Subunits NuoA, H, J, K, L, M, N constitute the membrane sector of the complex.

The protein localises to the cell inner membrane. The enzyme catalyses a quinone + NADH + 5 H(+)(in) = a quinol + NAD(+) + 4 H(+)(out). Functionally, NDH-1 shuttles electrons from NADH, via FMN and iron-sulfur (Fe-S) centers, to quinones in the respiratory chain. The immediate electron acceptor for the enzyme in this species is believed to be ubiquinone. Couples the redox reaction to proton translocation (for every two electrons transferred, four hydrogen ions are translocated across the cytoplasmic membrane), and thus conserves the redox energy in a proton gradient. This subunit may bind ubiquinone. The protein is NADH-quinone oxidoreductase subunit H of Methylococcus capsulatus (strain ATCC 33009 / NCIMB 11132 / Bath).